The primary structure comprises 95 residues: Ascorbate-specific PTS system EIIB component (95 aa).

Residues 1 to 95 (MENKNLHIIA…EIKQALSKVL (95 aa)) enclose the PTS EIIB type-2 domain. Cys12 (phosphocysteine intermediate) is an active-site residue. Cys12 is subject to Phosphocysteine.

It localises to the cytoplasm. It carries out the reaction N(pros)-phospho-L-histidyl-[protein] + L-ascorbate(out) = L-ascorbate 6-phosphate(in) + L-histidyl-[protein]. Its function is as follows. The phosphoenolpyruvate-dependent sugar phosphotransferase system (sugar PTS), a major carbohydrate active transport system, catalyzes the phosphorylation of incoming sugar substrates concomitantly with their translocation across the cell membrane. The enzyme II UlaABC PTS system is involved in ascorbate transport. This chain is Ascorbate-specific PTS system EIIB component (ulaB), found in Mycoplasma pneumoniae (strain ATCC 29342 / M129 / Subtype 1) (Mycoplasmoides pneumoniae).